A 358-amino-acid chain; its full sequence is Putative ZDHHC-type palmitoyltransferase 4 (358 aa).

4 helical membrane-spanning segments follow: residues 28–48 (FVGF…TIIF), 57–77 (LFFI…TYGI), 171–191 (YFFL…AHSL), and 210–230 (LLVI…GSFG). Residues 127–177 (SYCKKCSKAKPPRCHHCSVCDKCVLKMDHHCPWIGGCVGFYNYRYFFLFLS) enclose the DHHC domain. Asn255 and Asn296 each carry an N-linked (GlcNAc...) asparagine glycan. Positions 302-358 (NNKNNENNENNENNEIDNHNNNNNNNNNNNNNEKEDNINENDNLISYDTDEYNRHKK) are disordered. Residues 305-332 (NNENNENNENNEIDNHNNNNNNNNNNNN) are compositionally biased toward low complexity.

It belongs to the DHHC palmitoyltransferase family.

The protein resides in the membrane. It carries out the reaction L-cysteinyl-[protein] + hexadecanoyl-CoA = S-hexadecanoyl-L-cysteinyl-[protein] + CoA. The protein is Putative ZDHHC-type palmitoyltransferase 4 of Dictyostelium discoideum (Social amoeba).